A 415-amino-acid chain; its full sequence is Serine hydroxymethyltransferase (415 aa).

Residues Leu-117 and 121 to 123 each bind (6S)-5,6,7,8-tetrahydrofolate; that span reads GHL. Residue Lys-226 is modified to N6-(pyridoxal phosphate)lysine. (6S)-5,6,7,8-tetrahydrofolate is bound at residue Glu-241.

Belongs to the SHMT family. As to quaternary structure, homodimer. It depends on pyridoxal 5'-phosphate as a cofactor.

Its subcellular location is the cytoplasm. It catalyses the reaction (6R)-5,10-methylene-5,6,7,8-tetrahydrofolate + glycine + H2O = (6S)-5,6,7,8-tetrahydrofolate + L-serine. It functions in the pathway one-carbon metabolism; tetrahydrofolate interconversion. Its pathway is amino-acid biosynthesis; glycine biosynthesis; glycine from L-serine: step 1/1. In terms of biological role, catalyzes the reversible interconversion of serine and glycine with tetrahydrofolate (THF) serving as the one-carbon carrier. This reaction serves as the major source of one-carbon groups required for the biosynthesis of purines, thymidylate, methionine, and other important biomolecules. Also exhibits THF-independent aldolase activity toward beta-hydroxyamino acids, producing glycine and aldehydes, via a retro-aldol mechanism. The protein is Serine hydroxymethyltransferase of Bacillus subtilis (strain 168).